The following is a 430-amino-acid chain: NADH-quinone oxidoreductase subunit D 1 (430 aa).

Residues 1-36 are disordered; the sequence is MSEAKGVGGIDPRATPGSAGAGERPPMGTVSRAGDG.

It belongs to the complex I 49 kDa subunit family. As to quaternary structure, NDH-1 is composed of 14 different subunits. Subunits NuoB, C, D, E, F, and G constitute the peripheral sector of the complex.

It is found in the cell inner membrane. The enzyme catalyses a quinone + NADH + 5 H(+)(in) = a quinol + NAD(+) + 4 H(+)(out). Its function is as follows. NDH-1 shuttles electrons from NADH, via FMN and iron-sulfur (Fe-S) centers, to quinones in the respiratory chain. The immediate electron acceptor for the enzyme in this species is believed to be ubiquinone. Couples the redox reaction to proton translocation (for every two electrons transferred, four hydrogen ions are translocated across the cytoplasmic membrane), and thus conserves the redox energy in a proton gradient. In Anaeromyxobacter dehalogenans (strain 2CP-C), this protein is NADH-quinone oxidoreductase subunit D 1.